The following is a 276-amino-acid chain: NH(3)-dependent NAD(+) synthetase (276 aa).

43–50 lines the ATP pocket; sequence GISGGVDS. Aspartate 49 lines the Mg(2+) pocket. Residue arginine 146 coordinates deamido-NAD(+). Threonine 166 lines the ATP pocket. Glutamate 171 lines the Mg(2+) pocket. Deamido-NAD(+) contacts are provided by lysine 179 and aspartate 186. ATP-binding residues include lysine 195 and threonine 217. Deamido-NAD(+) is bound at residue 266–267; it reads HK.

The protein belongs to the NAD synthetase family. In terms of assembly, homodimer.

The catalysed reaction is deamido-NAD(+) + NH4(+) + ATP = AMP + diphosphate + NAD(+) + H(+). It participates in cofactor biosynthesis; NAD(+) biosynthesis; NAD(+) from deamido-NAD(+) (ammonia route): step 1/1. In terms of biological role, catalyzes the ATP-dependent amidation of deamido-NAD to form NAD. Uses ammonia as a nitrogen source. This Psychromonas ingrahamii (strain DSM 17664 / CCUG 51855 / 37) protein is NH(3)-dependent NAD(+) synthetase.